The primary structure comprises 393 residues: MVSKDQTSFNKRWTLGLLMLGLVIILWVLSSFLINLIFEDDSYRKPFFITYTNTAAFIFYLFPTAKAVVVNYKDTGRANVHRELIMEEEGTGSDSNRSVDMTSPLLTNLEAGTHANQKKRLTLYETIKLSAEFCILWFTANLVTNASLAFTSVASQTILSTTSSFFTLFIGAICHVESLSKSKVLGSFISFVGIIMVTKSDSHQRYQRHIADVSGDDNDAVQVLIGNLLALAGAVLYGVYSTLLKREVGDETRVNMKIFFGFVGLFNLLFLWPSLIVLDFFGWEPFSLPKDPKVVVIIFVNCLITFVSDFCWAKAMLLTSPLTVTVGLSITIPLAMFGDVIFKHKTMSALYLFGATLILGSFFIINKSSEEEHFENSITASNYESVEVPAANN.

Over 1 to 17 the chain is Cytoplasmic; it reads MVSKDQTSFNKRWTLGL. The chain crosses the membrane as a helical span at residues 18 to 38; the sequence is LMLGLVIILWVLSSFLINLIF. Topologically, residues 39–46 are vacuolar; it reads EDDSYRKP. A helical transmembrane segment spans residues 47–67; it reads FFITYTNTAAFIFYLFPTAKA. At 68–132 the chain is on the cytoplasmic side; that stretch reads VVVNYKDTGR…LYETIKLSAE (65 aa). At serine 93 the chain carries Phosphoserine. The chain crosses the membrane as a helical span at residues 133-153; the sequence is FCILWFTANLVTNASLAFTSV. The Vacuolar segment spans residues 154 to 156; the sequence is ASQ. Residues 157 to 176 form a helical membrane-spanning segment; the sequence is TILSTTSSFFTLFIGAICHV. The Cytoplasmic segment spans residues 177 to 182; it reads ESLSKS. A helical membrane pass occupies residues 183–200; it reads KVLGSFISFVGIIMVTKS. The Vacuolar segment spans residues 201-219; that stretch reads DSHQRYQRHIADVSGDDND. A helical membrane pass occupies residues 220-240; it reads AVQVLIGNLLALAGAVLYGVY. Residues 241–257 are Cytoplasmic-facing; the sequence is STLLKREVGDETRVNMK. Residues 258-278 form a helical membrane-spanning segment; sequence IFFGFVGLFNLLFLWPSLIVL. Residues 279–292 lie on the Vacuolar side of the membrane; sequence DFFGWEPFSLPKDP. The chain crosses the membrane as a helical span at residues 293–313; the sequence is KVVVIIFVNCLITFVSDFCWA. The Cytoplasmic segment spans residues 314–321; sequence KAMLLTSP. A helical transmembrane segment spans residues 322–342; it reads LTVTVGLSITIPLAMFGDVIF. The Vacuolar segment spans residues 343–345; sequence KHK. The helical transmembrane segment at 346-366 threads the bilayer; the sequence is TMSALYLFGATLILGSFFIIN. The Cytoplasmic segment spans residues 367 to 393; that stretch reads KSSEEEHFENSITASNYESVEVPAANN.

This sequence belongs to the TPT transporter family.

It localises to the vacuole membrane. This is an uncharacterized protein from Saccharomyces cerevisiae (strain ATCC 204508 / S288c) (Baker's yeast).